The following is a 458-amino-acid chain: Sushi repeat-containing protein SRPX2 (458 aa).

Positions 1-18 are cleaved as a signal peptide; that stretch reads MEASITVLLFAFTKVASS. Sushi domains are found at residues 62–112, 113–171, and 255–314; these read ATCY…HCRR, IQCH…VCVD, and RRCP…TCTP. 4 disulfide bridges follow: Cys-64-Cys-98, Cys-84-Cys-110, Cys-115-Cys-156, and Cys-142-Cys-169. In terms of domain architecture, HYR spans 170 to 254; it reads VDLDPPKIQC…SCKFIVKVQV (85 aa). 2 disulfide bridges follow: Cys-257/Cys-299 and Cys-285/Cys-312.

In terms of assembly, forms homooligomers.

It is found in the secreted. The protein localises to the cytoplasm. The protein resides in the cell surface. It localises to the synapse. May play a role in angiogenesis, synapse formation, cellular migration and adhesion. The polypeptide is Sushi repeat-containing protein SRPX2 (srpx2) (Xenopus laevis (African clawed frog)).